Reading from the N-terminus, the 374-residue chain is Flap endonuclease 1 (374 aa).

The tract at residues 1–105 is N-domain; sequence MGVKGLNKLI…GELEKRLLRR (105 aa). D34 lines the Mg(2+) pocket. Residues R47 and R71 each coordinate DNA. 5 residues coordinate Mg(2+): D87, E159, E161, D180, and D182. The tract at residues 123–254 is I-domain; sequence DHLKFEKRLV…VTAYKLIKEH (132 aa). DNA is bound at residue E159. Positions 232 and 234 each coordinate DNA. D234 provides a ligand contact to Mg(2+). The tract at residues 339–347 is interaction with PCNA; it reads VQGRLDSFF. Residues 353–374 form a disordered region; it reads DDGKDKKRKSTAKDTKSKKQKK.

The protein belongs to the XPG/RAD2 endonuclease family. FEN1 subfamily. Interacts with PCNA. Three molecules of RAD27 bind to one PCNA trimer with each molecule binding to one PCNA monomer. PCNA stimulates the nuclease activity without altering cleavage specificity. Mg(2+) is required as a cofactor. In terms of processing, phosphorylated. Phosphorylation upon DNA damage induces relocalization to the nuclear plasma.

The protein localises to the nucleus. Its subcellular location is the nucleolus. The protein resides in the nucleoplasm. It localises to the mitochondrion. In terms of biological role, structure-specific nuclease with 5'-flap endonuclease and 5'-3' exonuclease activities involved in DNA replication and repair. During DNA replication, cleaves the 5'-overhanging flap structure that is generated by displacement synthesis when DNA polymerase encounters the 5'-end of a downstream Okazaki fragment. It enters the flap from the 5'-end and then tracks to cleave the flap base, leaving a nick for ligation. Also involved in the long patch base excision repair (LP-BER) pathway, by cleaving within the apurinic/apyrimidinic (AP) site-terminated flap. Acts as a genome stabilization factor that prevents flaps from equilibrating into structures that lead to duplications and deletions. Also possesses 5'-3' exonuclease activity on nicked or gapped double-stranded DNA, and exhibits RNase H activity. Also involved in replication and repair of rDNA and in repairing mitochondrial DNA. The polypeptide is Flap endonuclease 1 (Candida tropicalis (strain ATCC MYA-3404 / T1) (Yeast)).